Consider the following 127-residue polypeptide: Large ribosomal subunit protein bL17 (127 aa).

Belongs to the bacterial ribosomal protein bL17 family. As to quaternary structure, part of the 50S ribosomal subunit. Contacts protein L32.

This chain is Large ribosomal subunit protein bL17, found in Levilactobacillus brevis (strain ATCC 367 / BCRC 12310 / CIP 105137 / JCM 1170 / LMG 11437 / NCIMB 947 / NCTC 947) (Lactobacillus brevis).